The chain runs to 786 residues: Kazrin-A (786 aa).

The segment at 44–70 is disordered; sequence EEPGEPQEHQQQQQQQNHQDAPVQRQK. The segment covering 52-62 has biased composition (low complexity); the sequence is HQQQQQQQNHQ. Residues 92–270 adopt a coiled-coil conformation; that stretch reads LLHEEVLRLQ…SLATLTKDVP (179 aa). Residues 350–425 form a disordered region; sequence MSDASVMEGE…LFDDSDSLSS (76 aa). SAM domains follow at residues 457–522, 535–599, and 623–686; these read WRAG…YRDA, DHHW…LHTL, and WTCQ…SEEM. Residues 703–760 are disordered; sequence PLGTPPTLHRQSSLSSSSPSCHDDQQSLRRVKQQLGLSPKNLTARNISHQSRSGSFPR. Residues 742–758 are compositionally biased toward polar residues; sequence KNLTARNISHQSRSGSF.

The protein belongs to the kazrin family.

The sequence is that of Kazrin-A (kazna) from Danio rerio (Zebrafish).